Consider the following 591-residue polypeptide: Peroxisome assembly protein 2 (591 aa).

Residues 1–78 (MSDSDPKPTA…TNIDTNNNTN (78 aa)) are disordered. The Peroxisomal matrix portion of the chain corresponds to 1-148 (MSDSDPKPTA…TSREGTRPAF (148 aa)). A compositionally biased stretch (low complexity) spans 7–26 (KPTAAKGAAPTSIPNSTRNP). A compositionally biased stretch (pro residues) spans 27-54 (NPTPPNPNPNPNPISTPAPTPTATPSPP). Over residues 55–78 (IASSSNNGNNSTRSTNIDTNNNTN) the composition is skewed to low complexity. Residues 149–175 (RVGQVDAELLDEELVELLRGQVREALR) traverse the membrane as a helical segment. At 176–196 (YVGGGGGGGGGGGGGGVGSGV) the chain is on the cytoplasmic side. The helical transmembrane segment at 197 to 222 (AQDWEAEISLALRAVLFKLTVWDHDA) threads the bilayer. Topologically, residues 223 to 246 (TYGAALQNLKYTDARRDGPALAPP) are peroxisomal matrix. Residues 247-273 (SRWQKALYGLVTVGGRYLWAKWEDWLL) form a helical membrane-spanning segment. At 274-283 (EQDDGFEGPS) the chain is on the cytoplasmic side. A helical transmembrane segment spans residues 284-314 (PRVKRLARWTSALSTLHASAALVSFLVFLLH). Topologically, residues 315-341 (GRYRTLLDRLLRMRLAPPTSQVSREVS) are peroxisomal matrix. A helical transmembrane segment spans residues 342–365 (FEYLNRQLVWHAFTEFLLFVLPLV). Residues 366 to 591 (GINRWRRWLA…EDGLDEDPES (226 aa)) lie on the Cytoplasmic side of the membrane. Positions 408, 411, 449, 451, 454, 457, 472, and 475 each coordinate Zn(2+). An RING-type; atypical zinc finger spans residues 408–475 (CAICYRDQNS…EGEGWPCLRC (68 aa)). Residues 512-591 (KAPSDHEEEE…EDGLDEDPES (80 aa)) are disordered. Composition is skewed to acidic residues over residues 517-537 (HEEEENEEEEEQQGELGENEG) and 575-591 (SEDYEAEEDGLDEDPES).

Belongs to the pex2/pex10/pex12 family. Component of the PEX2-PEX10-PEX12 retrotranslocation channel, composed of PEX2, PEX10 and PEX12.

It is found in the peroxisome membrane. The enzyme catalyses [E2 ubiquitin-conjugating enzyme]-S-ubiquitinyl-L-cysteine + [acceptor protein]-L-cysteine = [E2 ubiquitin-conjugating enzyme]-L-cysteine + [acceptor protein]-S-ubiquitinyl-L-cysteine.. The protein operates within protein modification; protein ubiquitination. Its function is as follows. E3 ubiquitin-protein ligase component of a retrotranslocation channel required for peroxisome organization by mediating export of the PEX5 receptor from peroxisomes to the cytosol, thereby promoting PEX5 recycling. The retrotranslocation channel is composed of PEX2, PEX10 and PEX12; each subunit contributing transmembrane segments that coassemble into an open channel that specifically allows the passage of PEX5 through the peroxisomal membrane. PEX2 also regulates peroxisome organization by acting as a E3 ubiquitin-protein ligase. PEX2 ubiquitinates PEX5 during its passage through the retrotranslocation channel: catalyzes monoubiquitination of PEX5 at 'Cys-6', a modification that acts as a signal for PEX5 extraction into the cytosol. The protein is Peroxisome assembly protein 2 of Thermothelomyces thermophilus (strain ATCC 42464 / BCRC 31852 / DSM 1799) (Sporotrichum thermophile).